The chain runs to 117 residues: DNA-directed RNA polymerase subunit omega (117 aa).

The span at 96 to 105 shows a compositional bias: basic and acidic residues; the sequence is KEEAEEEAKQ. Positions 96–117 are disordered; the sequence is KEEAEEEAKQKNSRAAKAAAAE. The span at 108–117 shows a compositional bias: low complexity; the sequence is SRAAKAAAAE.

It belongs to the RNA polymerase subunit omega family. In terms of assembly, the RNAP catalytic core consists of 2 alpha, 1 beta, 1 beta' and 1 omega subunit. When a sigma factor is associated with the core the holoenzyme is formed, which can initiate transcription.

It carries out the reaction RNA(n) + a ribonucleoside 5'-triphosphate = RNA(n+1) + diphosphate. Its function is as follows. Promotes RNA polymerase assembly. Latches the N- and C-terminal regions of the beta' subunit thereby facilitating its interaction with the beta and alpha subunits. This Lactococcus lactis subsp. cremoris (strain MG1363) protein is DNA-directed RNA polymerase subunit omega.